The sequence spans 220 residues: Large ribosomal subunit protein uL1 (220 aa).

Belongs to the universal ribosomal protein uL1 family. As to quaternary structure, part of the 50S ribosomal subunit.

Its function is as follows. Binds directly to 23S rRNA. The L1 stalk is quite mobile in the ribosome, and is involved in E site tRNA release. In terms of biological role, protein L1 is also a translational repressor protein, it controls the translation of the L11 operon by binding to its mRNA. This is Large ribosomal subunit protein uL1 from Ehrlichia canis (strain Jake).